We begin with the raw amino-acid sequence, 440 residues long: Ribosomal protein uS12 methylthiotransferase RimO (440 aa).

The region spanning 6 to 116 (PKVGFVSLGC…VVTAVHEVVP (111 aa)) is the MTTase N-terminal domain. [4Fe-4S] cluster is bound by residues cysteine 15, cysteine 51, cysteine 80, cysteine 149, cysteine 153, and cysteine 156. Residues 135 to 373 (LTPRHYAYLK…MAHQQAISAA (239 aa)) enclose the Radical SAM core domain. Residues 376–440 (QLKVGKEIEV…DEYDLWAELV (65 aa)) enclose the TRAM domain.

The protein belongs to the methylthiotransferase family. RimO subfamily. [4Fe-4S] cluster is required as a cofactor.

Its subcellular location is the cytoplasm. It catalyses the reaction L-aspartate(89)-[ribosomal protein uS12]-hydrogen + (sulfur carrier)-SH + AH2 + 2 S-adenosyl-L-methionine = 3-methylsulfanyl-L-aspartate(89)-[ribosomal protein uS12]-hydrogen + (sulfur carrier)-H + 5'-deoxyadenosine + L-methionine + A + S-adenosyl-L-homocysteine + 2 H(+). Catalyzes the methylthiolation of an aspartic acid residue of ribosomal protein uS12. This chain is Ribosomal protein uS12 methylthiotransferase RimO, found in Pseudomonas aeruginosa (strain ATCC 15692 / DSM 22644 / CIP 104116 / JCM 14847 / LMG 12228 / 1C / PRS 101 / PAO1).